The primary structure comprises 624 residues: Phosphatidylinositol 4-kinase lsb6 (624 aa).

The segment covering 1 to 31 (MESTFHSDTLDSFPNYQENSLNTNEEQTNPL) has biased composition (polar residues). Residues 1–53 (MESTFHSDTLDSFPNYQENSLNTNEEQTNPLESLRDGWASSNSSSSSSLLLPD) form a disordered region. Residues 40-51 (SSNSSSSSSLLL) are compositionally biased toward low complexity. The PI3K/PI4K catalytic domain maps to 145–520 (GVFPVLISKG…LLELPNLYVV (376 aa)). Positions 151–157 (ISKGSSG) are G-loop. The interval 346 to 354 (RNTDRNLDN) is catalytic loop. Residues 409–429 (AIDNSLAFPYKHPDSWRSFPY) are activation loop.

Belongs to the PI3/PI4-kinase family. It depends on Mg(2+) as a cofactor. The cofactor is Mn(2+).

It localises to the cell membrane. The protein localises to the vacuole membrane. It is found in the golgi apparatus membrane. The enzyme catalyses a 1,2-diacyl-sn-glycero-3-phospho-(1D-myo-inositol) + ATP = a 1,2-diacyl-sn-glycero-3-phospho-(1D-myo-inositol 4-phosphate) + ADP + H(+). Functionally, may play a role in endocytic and/or exocytic pathways. The chain is Phosphatidylinositol 4-kinase lsb6 (lsb6) from Schizosaccharomyces pombe (strain 972 / ATCC 24843) (Fission yeast).